Here is a 447-residue protein sequence, read N- to C-terminus: uncharacterized protein (447 aa).

It belongs to the class-II fumarase/aspartase family.

The protein localises to the cytoplasm. The protein resides in the nucleus. This is an uncharacterized protein from Schizosaccharomyces pombe (strain 972 / ATCC 24843) (Fission yeast).